A 514-amino-acid chain; its full sequence is UDP-N-acetylmuramoyl-L-alanyl-D-glutamate--2,6-diaminopimelate ligase (514 aa).

Thr37 provides a ligand contact to UDP-N-acetyl-alpha-D-muramoyl-L-alanyl-D-glutamate. 125–131 (GTNGKTS) contributes to the ATP binding site. Residues 167-168 (TT), Ser194, Gln200, and Arg202 contribute to the UDP-N-acetyl-alpha-D-muramoyl-L-alanyl-D-glutamate site. Residue Lys234 is modified to N6-carboxylysine. Meso-2,6-diaminopimelate-binding positions include Arg406, 430-433 (DNPR), Gly481, and Glu485. The short motif at 430–433 (DNPR) is the Meso-diaminopimelate recognition motif element.

Belongs to the MurCDEF family. MurE subfamily. Requires Mg(2+) as cofactor. Carboxylation is probably crucial for Mg(2+) binding and, consequently, for the gamma-phosphate positioning of ATP.

It is found in the cytoplasm. It catalyses the reaction UDP-N-acetyl-alpha-D-muramoyl-L-alanyl-D-glutamate + meso-2,6-diaminopimelate + ATP = UDP-N-acetyl-alpha-D-muramoyl-L-alanyl-gamma-D-glutamyl-meso-2,6-diaminopimelate + ADP + phosphate + H(+). The protein operates within cell wall biogenesis; peptidoglycan biosynthesis. Catalyzes the addition of meso-diaminopimelic acid to the nucleotide precursor UDP-N-acetylmuramoyl-L-alanyl-D-glutamate (UMAG) in the biosynthesis of bacterial cell-wall peptidoglycan. The sequence is that of UDP-N-acetylmuramoyl-L-alanyl-D-glutamate--2,6-diaminopimelate ligase from Ralstonia nicotianae (strain ATCC BAA-1114 / GMI1000) (Ralstonia solanacearum).